We begin with the raw amino-acid sequence, 390 residues long: ATP-sensitive inward rectifier potassium channel 11 (390 aa).

At 1 to 65 the chain is on the cytoplasmic side; the sequence is MLSRKGIIPE…LQDVFTTLVD (65 aa). Residues asparagine 48 and arginine 50 each coordinate ATP. The helical transmembrane segment at 66–92 threads the bilayer; sequence LKWPHTLLIFTMSFLCSWLLFAMVWWL. At 93-116 the chain is on the extracellular side; it reads IAFAHGDLAPGEGTNVPCVTSIHS. An intrachain disulfide couples cysteine 110 to cysteine 142. Residues 117–133 constitute an intramembrane region (discontinuously helical; Pore-forming); the sequence is FSSAFLFSIEVQVTIGF. Residues threonine 130 and phenylalanine 133 each contribute to the K(+) site. A Selectivity filter motif is present at residues 130-135; sequence TIGFGG. Residues 134 to 142 lie on the Extracellular side of the membrane; that stretch reads GGRMVTEEC. The helical transmembrane segment at 143–171 threads the bilayer; the sequence is PLAILILIVQNIVGLMINAIMLGCIFMKT. Over 172 to 390 the chain is Cytoplasmic; the sequence is AQAHRRAETL…KFSISPDSLS (219 aa). An a 1,2-diacyl-sn-glycero-3-phospho-(1D-myo-inositol-4,5-bisphosphate)-binding site is contributed by arginine 176. Tyrosine 330 provides a ligand contact to ATP. Threonine 341 is subject to Phosphothreonine; by MAPK1. The residue at position 385 (serine 385) is a Phosphoserine; by MAPK1.

Belongs to the inward rectifier-type potassium channel (TC 1.A.2.1) family. KCNJ11 subfamily. As to quaternary structure, homotetramer; the homotetramer binds four ATP molecules (one ATP per subunit). Forms an heterooctamer with ABCC8/SUR1; one KCNJ11 homotetramer interacts with four ABCC8/SUR1 molecules. Interacts with ABCC9/SUR2. In terms of processing, phosphorylation by MAPK1 results in changes in channel gating that destabilize the closed states and reduce the ATP sensitivity.

Its subcellular location is the membrane. It carries out the reaction K(+)(in) = K(+)(out). Its activity is regulated as follows. KATP channels are regulated by cytoplasmic ATP/ADP ratios; ATP inhibits the channel by closing the pore, while ADP activates the channel. Activated by phosphatidylinositol 4,5-biphosphate (PtdIns(4,5)P2). Functionally, inward rectifier potassium channel that forms the pore of ATP-sensitive potassium channels (KATP), regulating potassium permeability as a function of cytoplasmic ATP and ADP concentrations in many different cells. Inward rectifier potassium channels are characterized by a greater tendency to allow potassium to flow into the cell rather than out of it. Their voltage dependence is regulated by the concentration of extracellular potassium; as external potassium is raised, the voltage range of the channel opening shifts to more positive voltages. The inward rectification is mainly due to the blockage of outward current by internal magnesium. Can be blocked by extracellular barium. In pancreatic cells, it forms KATP channels with ABCC8/SUR1. Can form cardiac and smooth muscle-type KATP channels with ABCC9. This chain is ATP-sensitive inward rectifier potassium channel 11 (Kcnj11), found in Mus musculus (Mouse).